We begin with the raw amino-acid sequence, 351 residues long: UDP-N-acetylenolpyruvoylglucosamine reductase (351 aa).

An FAD-binding PCMH-type domain is found at 25 to 196 (HIQAQARWLL…TAVEFRLPLL (172 aa)). Residue R173 is part of the active site. The active-site Proton donor is the S246. E343 is a catalytic residue.

It belongs to the MurB family. Requires FAD as cofactor.

The protein resides in the cytoplasm. It carries out the reaction UDP-N-acetyl-alpha-D-muramate + NADP(+) = UDP-N-acetyl-3-O-(1-carboxyvinyl)-alpha-D-glucosamine + NADPH + H(+). It functions in the pathway cell wall biogenesis; peptidoglycan biosynthesis. Functionally, cell wall formation. The protein is UDP-N-acetylenolpyruvoylglucosamine reductase of Xylella fastidiosa (strain M23).